We begin with the raw amino-acid sequence, 308 residues long: Oligopeptide transport system permease protein AmiD (308 aa).

A run of 6 helical transmembrane segments spans residues 43-63, 111-131, 145-167, 171-193, 234-254, and 274-294; these read TVVMLGILVAIILISFIYPMF, ILISVIATVINLVIGVFVGGI, VYNVISNIPPLLIVIVLTYSIGA, NLIFAMSVTTWIGIAFMIRVQIL, MLPSFISYEAFLSFFGLGLPI, and AYLFWIPLTTLVLVSLSLFVV. Residues 107 to 295 form the ABC transmembrane type-1 domain; the sequence is ARNSILISVI…LVSLSLFVVG (189 aa).

The protein belongs to the binding-protein-dependent transport system permease family. OppBC subfamily.

It localises to the cell membrane. Part of the binding-protein-dependent transport system for oligopeptides; probably responsible for the translocation of the substrate across the membrane. The chain is Oligopeptide transport system permease protein AmiD (amiD) from Streptococcus pneumoniae (strain ATCC BAA-255 / R6).